The following is a 98-amino-acid chain: DNA-binding protein Fis (98 aa).

The segment at residues 74–93 (QTRAALMMGINRGTLRKKLK) is a DNA-binding region (H-T-H motif).

It belongs to the transcriptional regulatory Fis family. In terms of assembly, homodimer.

Functionally, activates ribosomal RNA transcription. Plays a direct role in upstream activation of rRNA promoters. In Citrobacter koseri (strain ATCC BAA-895 / CDC 4225-83 / SGSC4696), this protein is DNA-binding protein Fis.